We begin with the raw amino-acid sequence, 199 residues long: Recombination protein RecR (199 aa).

The C4-type zinc-finger motif lies at 57–72 (CSICGNITEDDPCVIC). The Toprim domain maps to 80 to 176 (STVLVVEEAK…KVTRLAHGLS (97 aa)).

The protein belongs to the RecR family.

In terms of biological role, may play a role in DNA repair. It seems to be involved in an RecBC-independent recombinational process of DNA repair. It may act with RecF and RecO. The sequence is that of Recombination protein RecR from Lactiplantibacillus plantarum (strain ATCC BAA-793 / NCIMB 8826 / WCFS1) (Lactobacillus plantarum).